A 458-amino-acid chain; its full sequence is 5'-adenylylsulfate reductase 3, chloroplastic (458 aa).

Residues 1 to 24 (MALAINVSSSSSSAISSSSFPSSD) form a disordered region. A chloroplast-targeting transit peptide spans 1 to 69 (MALAINVSSS…VQSITKESIV (69 aa)). A compositionally biased stretch (low complexity) spans 8-23 (SSSSSSAISSSSFPSS). Residues 70–319 (ASEVTEKLDV…KAKECGLHKG (250 aa)) are reductase domain. The Thioredoxin domain occupies 337–458 (ASVADIFNSE…SLTSFLNLVR (122 aa)). Catalysis depends on nucleophile residues C378 and C381. A disulfide bridge links C378 with C381.

The protein belongs to the APS reductase family. [4Fe-4S] cluster serves as cofactor. In terms of tissue distribution, leaves, roots and stem.

It is found in the plastid. The protein localises to the chloroplast. It catalyses the reaction glutathione disulfide + sulfite + AMP + 2 H(+) = adenosine 5'-phosphosulfate + 2 glutathione. Stimulated by sodium sulfate &gt; ammonium sulfate. Its function is as follows. Reduces sulfate for Cys biosynthesis. Substrate preference is adenosine-5'-phosphosulfate (APS) &gt;&gt; 3'-phosphoadenosine-5'-phosphosulfate (PAPS). Uses glutathione or DTT as source of protons. This Arabidopsis thaliana (Mouse-ear cress) protein is 5'-adenylylsulfate reductase 3, chloroplastic (APR3).